Reading from the N-terminus, the 190-residue chain is Xanthine phosphoribosyltransferase (190 aa).

Positions 20 and 27 each coordinate xanthine. 128 to 132 provides a ligand contact to 5-phospho-alpha-D-ribose 1-diphosphate; sequence ANGHA. Residue lysine 156 participates in xanthine binding.

It belongs to the purine/pyrimidine phosphoribosyltransferase family. Xpt subfamily. In terms of assembly, homodimer.

The protein localises to the cytoplasm. The enzyme catalyses XMP + diphosphate = xanthine + 5-phospho-alpha-D-ribose 1-diphosphate. It participates in purine metabolism; XMP biosynthesis via salvage pathway; XMP from xanthine: step 1/1. In terms of biological role, converts the preformed base xanthine, a product of nucleic acid breakdown, to xanthosine 5'-monophosphate (XMP), so it can be reused for RNA or DNA synthesis. This chain is Xanthine phosphoribosyltransferase, found in Pseudomonas aeruginosa (strain LESB58).